We begin with the raw amino-acid sequence, 99 residues long: Putative membrane protein insertion efficiency factor (99 aa).

It belongs to the UPF0161 family.

It is found in the cell membrane. Could be involved in insertion of integral membrane proteins into the membrane. The sequence is that of Putative membrane protein insertion efficiency factor from Corynebacterium efficiens (strain DSM 44549 / YS-314 / AJ 12310 / JCM 11189 / NBRC 100395).